A 302-amino-acid chain; its full sequence is Sulfate adenylyltransferase subunit 2 (302 aa).

This sequence belongs to the PAPS reductase family. CysD subfamily. Heterodimer composed of CysD, the smaller subunit, and CysN.

The catalysed reaction is sulfate + ATP + H(+) = adenosine 5'-phosphosulfate + diphosphate. The protein operates within sulfur metabolism; hydrogen sulfide biosynthesis; sulfite from sulfate: step 1/3. In terms of biological role, with CysN forms the ATP sulfurylase (ATPS) that catalyzes the adenylation of sulfate producing adenosine 5'-phosphosulfate (APS) and diphosphate, the first enzymatic step in sulfur assimilation pathway. APS synthesis involves the formation of a high-energy phosphoric-sulfuric acid anhydride bond driven by GTP hydrolysis by CysN coupled to ATP hydrolysis by CysD. In Shigella dysenteriae serotype 1 (strain Sd197), this protein is Sulfate adenylyltransferase subunit 2.